Consider the following 671-residue polypeptide: DNA ligase (671 aa).

Residues 32-36 (DAEYD), 81-82 (SL), and Glu-113 each bind NAD(+). Lys-115 functions as the N6-AMP-lysine intermediate in the catalytic mechanism. Arg-136, Glu-173, Lys-290, and Lys-314 together coordinate NAD(+). Positions 408, 411, 426, and 432 each coordinate Zn(2+). The BRCT domain occupies 593–671 (EIDSPFAGKT…ETEMLRLLGS (79 aa)).

It belongs to the NAD-dependent DNA ligase family. LigA subfamily. Mg(2+) serves as cofactor. It depends on Mn(2+) as a cofactor.

It catalyses the reaction NAD(+) + (deoxyribonucleotide)n-3'-hydroxyl + 5'-phospho-(deoxyribonucleotide)m = (deoxyribonucleotide)n+m + AMP + beta-nicotinamide D-nucleotide.. In terms of biological role, DNA ligase that catalyzes the formation of phosphodiester linkages between 5'-phosphoryl and 3'-hydroxyl groups in double-stranded DNA using NAD as a coenzyme and as the energy source for the reaction. It is essential for DNA replication and repair of damaged DNA. This chain is DNA ligase, found in Escherichia fergusonii (strain ATCC 35469 / DSM 13698 / CCUG 18766 / IAM 14443 / JCM 21226 / LMG 7866 / NBRC 102419 / NCTC 12128 / CDC 0568-73).